A 259-amino-acid chain; its full sequence is Insulin-induced gene 1 protein (259 aa).

Residues 1–66 (MPRLHDHVWS…ARPGSWHHDL (66 aa)) are Cytoplasmic-facing. The tract at residues 33-57 (PQGPGAPEPEPAPRGQREGTAGFSA) is disordered. A helical transmembrane segment spans residues 67–89 (VQRSLVLFSFGVVLALVLNLLQI). The Extracellular portion of the chain corresponds to 90 to 108 (QRNVTLFPDEVIATIFSSA). A helical transmembrane segment spans residues 109–126 (WWVPPCCGTAAAVVGLLY). Residues 127–141 (PCIDSHLGEPHKFKR) lie on the Cytoplasmic side of the membrane. Glycyl lysine isopeptide (Lys-Gly) (interchain with G-Cter in ubiquitin) cross-links involve residues Lys138 and Lys140. The helical transmembrane segment at 142–164 (EWASVMRCIAVFVGINHASAKLD) threads the bilayer. The Extracellular segment spans residues 165–167 (FAN). Residues 168-186 (NVQLSLTLAALSLGLWWTF) form a helical membrane-spanning segment. The Cytoplasmic segment spans residues 187 to 191 (DRSRS). The residue at position 189 (Ser189) is a Phosphoserine. Residues 192 to 213 (GLGLGITIAFLATLITQFLVYN) form a helical membrane-spanning segment. Residues 214–227 (GVYQYTSPDFLYIR) are Extracellular-facing. The helical transmembrane segment at 228–245 (SWLPCIFFSGGVTVGNIG) threads the bilayer. The Cytoplasmic segment spans residues 246–259 (RQLAMGVPEKPHSD). The KxHxx signature appears at 253–259 (PEKPHSD).

It belongs to the INSIG family. Interacts with SCAP; interaction is direct and only takes place in the presence of sterols; it prevents interaction between SCAP and the coat protein complex II (COPII). Associates with the SCAP-SREBP complex (composed of SCAP and SREBF1/SREBP1 or SREBF2/SREBP2); association is mediated via its interaction with SCAP and only takes place in the presence of sterols. Interaction with SCAP is mutually exclusive with PAQR3. Interacts with HMGCR (via its SSD); the interaction, accelerated by sterols, leads to the recruitment of HMGCR to AMFR/gp78 for its ubiquitination by the sterol-mediated ERAD pathway. Interacts with AMFR/gp78 (via its membrane domain); the interaction recruits HMCR at the ER membrane for its ubiquitination and degradation by the sterol-mediated ERAD pathway. Interacts with SOAT2/ACAT2; leading to promote recruitment of AMFR/gp78 and subsequent ubiquitination of SOAT2/ACAT2. Interacts with RNF139. Interacts with RNF145. Phosphorylation at Ser-189 by PCK1 reduces binding to oxysterol, disrupting the interaction between INSIG1 and SCAP, thereby promoting nuclear translocation of SREBP proteins (SREBF1/SREBP1 or SREBF2/SREBP2) and subsequent transcription of downstream lipogenesis-related genes. In terms of processing, ubiquitinated by AMFR/gp78 in response to sterol deprivation, leading to its degradation: when the SCAP-SREBP complex becomes dissociated from INSIG1, INSIG1 is then ubiquitinated and degraded in proteasomes. Although ubiquitination is required for rapid INSIG1 degradation, it is not required for release of the SCAP-SREBP complex. Ubiquitinated by RNF139. Highly expressed in liver and kidney.

The protein localises to the endoplasmic reticulum membrane. In terms of biological role, oxysterol-binding protein that mediates feedback control of cholesterol synthesis by controlling both endoplasmic reticulum to Golgi transport of SCAP and degradation of HMGCR. Acts as a negative regulator of cholesterol biosynthesis by mediating the retention of the SCAP-SREBP complex in the endoplasmic reticulum, thereby blocking the processing of sterol regulatory element-binding proteins (SREBPs) SREBF1/SREBP1 and SREBF2/SREBP2. Binds oxysterol, including 25-hydroxycholesterol, regulating interaction with SCAP and retention of the SCAP-SREBP complex in the endoplasmic reticulum. In presence of oxysterol, interacts with SCAP, retaining the SCAP-SREBP complex in the endoplasmic reticulum, thereby preventing SCAP from escorting SREBF1/SREBP1 and SREBF2/SREBP2 to the Golgi. Sterol deprivation or phosphorylation by PCK1 reduce oxysterol-binding, disrupting the interaction between INSIG1 and SCAP, thereby promoting Golgi transport of the SCAP-SREBP complex, followed by processing and nuclear translocation of SREBF1/SREBP1 and SREBF2/SREBP2. Also regulates cholesterol synthesis by regulating degradation of HMGCR: initiates the sterol-mediated ubiquitin-mediated endoplasmic reticulum-associated degradation (ERAD) of HMGCR via recruitment of the reductase to the ubiquitin ligases AMFR/gp78 and/or RNF139. Also regulates degradation of SOAT2/ACAT2 when the lipid levels are low: initiates the ubiquitin-mediated degradation of SOAT2/ACAT2 via recruitment of the ubiquitin ligases AMFR/gp78. In Rattus norvegicus (Rat), this protein is Insulin-induced gene 1 protein.